An 809-amino-acid chain; its full sequence is Glycerol-3-phosphate acyltransferase (809 aa).

Positions 309–314 match the HXXXXD motif motif; that stretch reads HRSHMD.

This sequence belongs to the GPAT/DAPAT family.

The protein resides in the cell inner membrane. The enzyme catalyses sn-glycerol 3-phosphate + an acyl-CoA = a 1-acyl-sn-glycero-3-phosphate + CoA. The protein operates within phospholipid metabolism; CDP-diacylglycerol biosynthesis; CDP-diacylglycerol from sn-glycerol 3-phosphate: step 1/3. This Shewanella oneidensis (strain ATCC 700550 / JCM 31522 / CIP 106686 / LMG 19005 / NCIMB 14063 / MR-1) protein is Glycerol-3-phosphate acyltransferase.